Consider the following 393-residue polypeptide: NAD(P)H-quinone oxidoreductase subunit H, chloroplastic (393 aa).

It belongs to the complex I 49 kDa subunit family. In terms of assembly, NDH is composed of at least 16 different subunits, 5 of which are encoded in the nucleus.

The protein localises to the plastid. It localises to the chloroplast thylakoid membrane. The enzyme catalyses a plastoquinone + NADH + (n+1) H(+)(in) = a plastoquinol + NAD(+) + n H(+)(out). It catalyses the reaction a plastoquinone + NADPH + (n+1) H(+)(in) = a plastoquinol + NADP(+) + n H(+)(out). Its function is as follows. NDH shuttles electrons from NAD(P)H:plastoquinone, via FMN and iron-sulfur (Fe-S) centers, to quinones in the photosynthetic chain and possibly in a chloroplast respiratory chain. The immediate electron acceptor for the enzyme in this species is believed to be plastoquinone. Couples the redox reaction to proton translocation, and thus conserves the redox energy in a proton gradient. The chain is NAD(P)H-quinone oxidoreductase subunit H, chloroplastic from Pelargonium hortorum (Common geranium).